The primary structure comprises 230 residues: Bidirectional sugar transporter SWEET2b (230 aa).

At 1 to 6 (MDSLYD) the chain is on the extracellular side. The helical transmembrane segment at 7 to 27 (ISCFAAGLAGNIFALALFLSP) threads the bilayer. One can recognise a MtN3/slv 1 domain in the interval 13-98 (GLAGNIFALA…CLFIFYADSR (86 aa)). Topologically, residues 28–45 (VTTFKRILKAKSTERFDG) are cytoplasmic. The helical transmembrane segment at 46-66 (LPYLFSLLNCLICLWYGLPWV) threads the bilayer. The Extracellular segment spans residues 67 to 72 (ADGRLL). A helical membrane pass occupies residues 73-93 (VATVNGIGAVFQLAYICLFIF). The Cytoplasmic segment spans residues 94-103 (YADSRKTRMK). A helical membrane pass occupies residues 104-124 (IIGLLVLVVCGFALVSHASVF). Residues 125 to 137 (FFDQPLRQQFVGA) are Extracellular-facing. The MtN3/slv 2 domain maps to 133–217 (QFVGAVSMAS…LALYAYYSRK (85 aa)). A helical membrane pass occupies residues 138–158 (VSMASLISMFASPLAVMGVVI). Residues 159 to 167 (RSESVEFMP) lie on the Cytoplasmic side of the membrane. A helical membrane pass occupies residues 168 to 188 (FYLSLSTFLMSASFALYGLLL). The Extracellular portion of the chain corresponds to 189-190 (RD). A helical transmembrane segment spans residues 191–211 (FFIYFPNGLGLILGAMQLALY). Residues 212-230 (AYYSRKWRGQDSSAPLLLA) are Cytoplasmic-facing.

Belongs to the SWEET sugar transporter family. Forms homooligomers and/or heterooligomers.

Its subcellular location is the cell membrane. In terms of biological role, mediates both low-affinity uptake and efflux of sugar across the plasma membrane. This is Bidirectional sugar transporter SWEET2b (SWEET2B) from Oryza sativa subsp. indica (Rice).